A 187-amino-acid polypeptide reads, in one-letter code: UPF0340 protein SPT_0687 (187 aa).

It belongs to the UPF0340 family.

This chain is UPF0340 protein SPT_0687, found in Streptococcus pneumoniae (strain Taiwan19F-14).